A 504-amino-acid polypeptide reads, in one-letter code: MEEFQRYLELDRFRQHDFLYPLLFREYIYALAHDHGFNSYMLLENIGYDNKSSLLIVKRLITRMYQHNYLMISANDSNQNPFFGYNKNLHSQIISEGFAVIVEIPFSLRLISSFEGAEIVISYKLRSIHSIFPFLEDKLPHLNYTTDVRIPYPIHLEILIQTLRSRVKDASYLHLLRFFLHQYSNWNILIITTKSISIFSKSNPRFFLFLYNSHICQYESIFLFLGNQSSHLRLISSGVLFERLYLHKKIEHFAEVFANDFPVIPCFLKDPFMHYVRYQGKSILASKDTPLLMNKWKYYLVNLWQCHFYVWSHPGRIHINQLSKHSLDFWGYFSSVRLNPSVVRSQMLENSFLINNAPKKLDIIVPIIPLIGSLAKARFCNALGHPISKLTRADLSDFEILNRFLRICRNLSHYYSGSSKKKSMYRIKYILRLSCVKTLARKHKSTARAFLKKVGSEFVQEFFTEEEEFLSLIFPRTSFTLRRLYRGRVWYLDIIFINGLANHE.

The protein belongs to the intron maturase 2 family. MatK subfamily.

It localises to the plastid. It is found in the chloroplast. Its function is as follows. Usually encoded in the trnK tRNA gene intron. Probably assists in splicing its own and other chloroplast group II introns. In Fagus japonica (Japanese beech), this protein is Maturase K.